The sequence spans 196 residues: Thymidine kinase (196 aa).

Residues 9–16 (SAMNAGKS) and 88–91 (DEAQ) each bind ATP. The active-site Proton acceptor is Glu-89. 4 residues coordinate Zn(2+): Cys-146, Cys-148, Cys-183, and His-186.

Belongs to the thymidine kinase family. In terms of assembly, homotetramer.

The protein resides in the cytoplasm. It carries out the reaction thymidine + ATP = dTMP + ADP + H(+). The sequence is that of Thymidine kinase from Coxiella burnetii (strain RSA 493 / Nine Mile phase I).